The primary structure comprises 104 residues: Large ribosomal subunit protein uL24 (104 aa).

It belongs to the universal ribosomal protein uL24 family. As to quaternary structure, part of the 50S ribosomal subunit.

One of two assembly initiator proteins, it binds directly to the 5'-end of the 23S rRNA, where it nucleates assembly of the 50S subunit. Functionally, one of the proteins that surrounds the polypeptide exit tunnel on the outside of the subunit. This is Large ribosomal subunit protein uL24 from Clostridium perfringens (strain SM101 / Type A).